A 446-amino-acid chain; its full sequence is Scytalone dehydratase-like protein Arp1 (446 aa).

Tyr323 serves as a coordination point for substrate. Residues His358 and His383 contribute to the active site. Asn404 provides a ligand contact to substrate.

This sequence belongs to the scytalone dehydratase family. As to quaternary structure, homotrimer. Each subunit contains an active site, located in the central part of the hydrophobic core of the monomer, which functions independently.

Its function is as follows. Scytalone dehydratase-like protein; part of the Pks2 gene cluster that mediates the formation of infectious structures (appressoria), enabling these fungi to kill insects faster. The product of the Pks2 gene cluster is different from the one of Pks1 and has still not been identified. This Metarhizium acridum (strain CQMa 102) protein is Scytalone dehydratase-like protein Arp1.